A 161-amino-acid polypeptide reads, in one-letter code: Probable K(+)/H(+) antiporter subunit E (161 aa).

Helical transmembrane passes span 4–21 (WFPY…WLLL) and 28–50 (GSIV…LQPA).

This sequence belongs to the CPA3 antiporters (TC 2.A.63) subunit E family. May form a hetero-oligomeric complex that consists of six subunits: PhaAB, PhaC, PhaD, PhaE, PhaF and PhaG.

The protein resides in the cell membrane. In terms of biological role, part of a K(+) efflux system which is required for the adaptation of R.meliloti to alkaline pH as well as for the infection process during symbiotic nodule development. This is Probable K(+)/H(+) antiporter subunit E (phaE) from Rhizobium meliloti (strain 1021) (Ensifer meliloti).